We begin with the raw amino-acid sequence, 424 residues long: Solute carrier family 67 member A1 (424 aa).

The next 10 helical transmembrane spans lie at 26–46 (ILLT…QFSI), 59–79 (IAFG…GPVF), 90–110 (AALT…AAAS), 156–176 (LGLC…TLVS), 184–204 (AILA…CIPA), 243–263 (IFLV…MFSI), 276–296 (AGYL…LVIG), 312–332 (VLVF…FHFC), 334–354 (LVPG…SMLI), and 391–411 (FGVP…LLVL).

It belongs to the major facilitator (TC 2.A.1) superfamily. Organic cation transporter (TC 2.A.1.19) family. Interacts with RNF167. As to expression, expressed at high levels in adult and fetal kidney and liver, and adult colon. Expressed in fetal renal proximal tubules (at protein level). Expressed at lower levels in heart, brain and lung.

The protein resides in the apical cell membrane. Functionally, may act as a transporter of organic cations based on a proton efflux antiport mechanism. May play a role in the transport of chloroquine and quinidine-related compounds in kidney. Plays a role in the regulation of lipid metabolism. This is Solute carrier family 67 member A1 from Homo sapiens (Human).